The chain runs to 143 residues: Histone H2B (143 aa).

The segment at Met1–Glu52 is disordered. An N6-acetyllysine; alternate modification is found at Lys11. Lys11 is covalently cross-linked (Glycyl lysine isopeptide (Lys-Gly) (interchain with G-Cter in SUMO); alternate). Ser15 is modified (phosphoserine). At Lys19 the chain carries N6-acetyllysine. A compositionally biased stretch (low complexity) spans Lys23–Ala39. Lys137 participates in a covalent cross-link: Glycyl lysine isopeptide (Lys-Gly) (interchain with G-Cter in ubiquitin).

Belongs to the histone H2B family. As to quaternary structure, the nucleosome is a histone octamer containing two molecules each of H2A, H2B, H3 and H4 assembled in one H3-H4 heterotetramer and two H2A-H2B heterodimers. The octamer wraps approximately 147 bp of DNA. In terms of processing, monoubiquitinated to form H2BK123ub1. H2BK123ub1 gives a specific tag for epigenetic transcriptional activation and is also prerequisite for H3K4me and H3K79me formation. H2BK123ub1 also modulates the formation of double-strand breaks during meiosis and is a prerequisite for DNA-damage checkpoint activation. Post-translationally, phosphorylated to form H2BS10ph during progression through meiotic prophase. May be correlated with chromosome condensation. Acetylation of N-terminal lysines and particularly formation of H2BK11ac has a positive effect on transcription. In terms of processing, sumoylation to form H2BK6su occurs preferentially near the telomeres and represses gene transcription.

The protein localises to the nucleus. The protein resides in the chromosome. Its function is as follows. Core component of nucleosome. Nucleosomes wrap and compact DNA into chromatin, limiting DNA accessibility to the cellular machineries which require DNA as a template. Histones thereby play a central role in transcription regulation, DNA repair, DNA replication and chromosomal stability. DNA accessibility is regulated via a complex set of post-translational modifications of histones, also called histone code, and nucleosome remodeling. This Agaricus bisporus (White button mushroom) protein is Histone H2B (htbA).